Consider the following 197-residue polypeptide: Thymidylate kinase (197 aa).

Residue 7–14 (GIDGSGKS) coordinates ATP.

It belongs to the thymidylate kinase family.

The enzyme catalyses dTMP + ATP = dTDP + ADP. In terms of biological role, phosphorylation of dTMP to form dTDP in both de novo and salvage pathways of dTTP synthesis. The sequence is that of Thymidylate kinase (tmk) from Thermotoga maritima (strain ATCC 43589 / DSM 3109 / JCM 10099 / NBRC 100826 / MSB8).